The primary structure comprises 117 residues: Large ribosomal subunit protein bL20 (117 aa).

The protein belongs to the bacterial ribosomal protein bL20 family.

Functionally, binds directly to 23S ribosomal RNA and is necessary for the in vitro assembly process of the 50S ribosomal subunit. It is not involved in the protein synthesizing functions of that subunit. In Idiomarina loihiensis (strain ATCC BAA-735 / DSM 15497 / L2-TR), this protein is Large ribosomal subunit protein bL20.